A 468-amino-acid chain; its full sequence is ATP synthase subunit beta (468 aa).

Position 153–160 (153–160 (GGAGVGKT)) interacts with ATP.

It belongs to the ATPase alpha/beta chains family. As to quaternary structure, F-type ATPases have 2 components, CF(1) - the catalytic core - and CF(0) - the membrane proton channel. CF(1) has five subunits: alpha(3), beta(3), gamma(1), delta(1), epsilon(1). CF(0) has three main subunits: a(1), b(2) and c(9-12). The alpha and beta chains form an alternating ring which encloses part of the gamma chain. CF(1) is attached to CF(0) by a central stalk formed by the gamma and epsilon chains, while a peripheral stalk is formed by the delta and b chains.

The protein localises to the cell inner membrane. The enzyme catalyses ATP + H2O + 4 H(+)(in) = ADP + phosphate + 5 H(+)(out). In terms of biological role, produces ATP from ADP in the presence of a proton gradient across the membrane. The catalytic sites are hosted primarily by the beta subunits. The sequence is that of ATP synthase subunit beta from Nautilia profundicola (strain ATCC BAA-1463 / DSM 18972 / AmH).